Reading from the N-terminus, the 164-residue chain is Hydroxylaminobenzene mutase HabB (164 aa).

The next 4 helical transmembrane spans lie at 16 to 36, 50 to 70, 78 to 98, and 121 to 141; these read LLQL…LLPM, GVLN…LSLG, FGFA…AGFW, and LIAF…ALAL.

The protein resides in the cell membrane. The catalysed reaction is N-phenylhydroxylamine = 2-aminophenol. With respect to regulation, addition of ZnSO(4) decreases the activity to 70%. Its function is as follows. Catalyzes the rearrangement of hydroxylaminobenzene to 2-aminophenol. This is Hydroxylaminobenzene mutase HabB (habB) from Ectopseudomonas oleovorans (Pseudomonas oleovorans).